A 386-amino-acid polypeptide reads, in one-letter code: DNA methyltransferase CcrM (386 aa).

The RAMA domain maps to 280–382 (LGKAELTVMT…LRKIIREQMA (103 aa)).

The protein belongs to the N(4)/N(6)-methyltransferase family.

It catalyses the reaction a 2'-deoxyadenosine in DNA + S-adenosyl-L-methionine = an N(6)-methyl-2'-deoxyadenosine in DNA + S-adenosyl-L-homocysteine + H(+). In terms of biological role, a beta subtype methylase that recognizes the double-stranded sequence 5'-GANTC-3' and methylates A-2 on both strands. CcrM-mediated methylation has important cellular functions. Contributes to the accurate cell-cycle control of DNA replication and cellular morphology. The polypeptide is DNA methyltransferase CcrM (ccrM) (Brucella abortus (strain S19)).